We begin with the raw amino-acid sequence, 137 residues long: Major seminal plasma glycoprotein PSP-II (137 aa).

Positions 1-21 (MKLGTAIPWALLLSTATLVST) are cleaved as a signal peptide. 2 disulfides stabilise this stretch: cysteine 30/cysteine 51 and cysteine 74/cysteine 95. The CUB domain occupies 30–131 (CGRVIKDTSG…SPFLIYFYGS (102 aa)). A glycan (N-linked (GlcNAc...) (complex) asparagine) is linked at asparagine 119.

In terms of assembly, monomer or heterodimer with PSP-I (depending on the type of glycosylation of PSP-I). In terms of tissue distribution, seminal plasma or sperm.

The protein localises to the secreted. The chain is Major seminal plasma glycoprotein PSP-II from Sus scrofa (Pig).